The sequence spans 203 residues: Pyrrolidone-carboxylate peptidase 1 (203 aa).

Active-site residues include Glu-78, Cys-141, and His-165.

Belongs to the peptidase C15 family. In terms of assembly, homotetramer.

It localises to the cytoplasm. It carries out the reaction Release of an N-terminal pyroglutamyl group from a polypeptide, the second amino acid generally not being Pro.. In terms of biological role, removes 5-oxoproline from various penultimate amino acid residues except L-proline. The polypeptide is Pyrrolidone-carboxylate peptidase 1 (Caldanaerobacter subterraneus subsp. tengcongensis (strain DSM 15242 / JCM 11007 / NBRC 100824 / MB4) (Thermoanaerobacter tengcongensis)).